The primary structure comprises 886 residues: DNA double-strand break repair Rad50 ATPase (886 aa).

ATP-binding positions include asparagine 32–serine 38 and glutamine 137. 2 coiled-coil regions span residues isoleucine 181–lysine 240 and arginine 320–asparagine 416. In terms of domain architecture, Zinc-hook spans isoleucine 391–asparagine 489. Positions 437 and 440 each coordinate Zn(2+). Coiled-coil stretches lie at residues alanine 450–leucine 657 and glutamate 682–lysine 718.

The protein belongs to the SMC family. RAD50 subfamily. As to quaternary structure, homodimer. Forms a heterotetramer composed of two Mre11 subunits and two Rad50 subunits. Interacts with Mre11 and HerA. Zn(2+) is required as a cofactor.

Its function is as follows. Part of the Rad50/Mre11 complex, which is involved in the early steps of DNA double-strand break (DSB) repair. The complex may facilitate opening of the processed DNA ends to aid in the recruitment of HerA and NurA. Rad50 controls the balance between DNA end bridging and DNA resection via ATP-dependent structural rearrangements of the Rad50/Mre11 complex. This is DNA double-strand break repair Rad50 ATPase from Sulfolobus acidocaldarius (strain ATCC 33909 / DSM 639 / JCM 8929 / NBRC 15157 / NCIMB 11770).